A 584-amino-acid polypeptide reads, in one-letter code: Pescadillo homolog (584 aa).

A required for 28S ribosomal RNA processing region spans residues methionine 1–valine 54. The tract at residues methionine 1–glutamate 257 is sufficient for nucleolar localization. Lysine 98 bears the N6-acetyllysine mark. Positions arginine 312–proline 414 are sufficient for interaction with MAP1B. The region spanning lysine 321 to proline 414 is the BRCT domain. Residues aspartate 449–glycine 510 are disordered. The segment covering glutamate 454–glutamate 489 has biased composition (acidic residues). Positions glutamate 496–proline 505 are enriched in basic and acidic residues. Lysine 513 participates in a covalent cross-link: Glycyl lysine isopeptide (Lys-Gly) (interchain with G-Cter in SUMO1); alternate. Lysine 513 participates in a covalent cross-link: Glycyl lysine isopeptide (Lys-Gly) (interchain with G-Cter in SUMO2); alternate. The interval methionine 535–valine 584 is required for 28S ribosomal RNA processing. A compositionally biased stretch (basic and acidic residues) spans lysine 560–glutamate 575. The segment at lysine 560–valine 584 is disordered.

Belongs to the pescadillo family. Component of the PeBoW complex, composed of BOP1, PES1 and WDR12. The complex is held together by BOP1, which interacts with PES1 via its N-terminal domain and with WDR12 via a high-affinity interaction between the seven-bladed beta-propeller domains of the 2 proteins. The PeBoW complex associates with the 66S pre-ribosome. The PeBoW complex also associates with DDX27, PES1 interacts directly with DDX27. Interacts with IRS1 and UBTF. May interact with MAP1B. Sumoylated. As to expression, ubiquitous. Highest levels appear to be found in tissues that contain a population of proliferating cells, such as ovary and testis. Also appears to be highly expressed in kidney and liver. In the brain expression is restricted to neural progenitor cells and postmitotic neurons. Highly expressed in malignant astrocytes.

It localises to the nucleus. The protein resides in the nucleolus. The protein localises to the nucleoplasm. It is found in the chromosome. Its function is as follows. Component of the PeBoW complex, which is required for maturation of 28S and 5.8S ribosomal RNAs and formation of the 60S ribosome. This Mus musculus (Mouse) protein is Pescadillo homolog (Pes1).